The sequence spans 288 residues: Proteasome assembly chaperone 1 (288 aa).

Alanine 2 is modified (N-acetylalanine). The interval 12–38 (TPCRAGTEEEEEEEDGNRETPEDREVR) is disordered. Threonine 18 carries the phosphothreonine modification. Residues 28-38 (NRETPEDREVR) show a composition bias toward basic and acidic residues. Phosphothreonine is present on threonine 54. Phosphoserine is present on serine 180. Lysine 264 carries the N6-acetyllysine modification.

This sequence belongs to the PSMG1 family. As to quaternary structure, forms a heterodimer with PSMG2. The PSMG1-PSMG2 heterodimer interacts directly with the PSMA5 and PSMA7 proteasome alpha subunits. Post-translationally, degraded by the proteasome upon completion of 20S proteasome maturation.

Its subcellular location is the cytoplasm. It localises to the endoplasmic reticulum. Its function is as follows. Chaperone protein which promotes assembly of the 20S proteasome as part of a heterodimer with PSMG2. The PSMG1-PSMG2 heterodimer binds to the PSMA5 and PSMA7 proteasome subunits, promotes assembly of the proteasome alpha subunits into the heteroheptameric alpha ring and prevents alpha ring dimerization. In Bos taurus (Bovine), this protein is Proteasome assembly chaperone 1.